We begin with the raw amino-acid sequence, 211 residues long: tRNA (guanine-N(7)-)-methyltransferase (211 aa).

4 residues coordinate S-adenosyl-L-methionine: E43, D68, N95, and N117. K121 lines the substrate pocket. Residues 123–128 (RHNKRR) form an interaction with RNA region. Residues D153 and 190–193 (TEYE) each bind substrate.

This sequence belongs to the class I-like SAM-binding methyltransferase superfamily. TrmB family.

It catalyses the reaction guanosine(46) in tRNA + S-adenosyl-L-methionine = N(7)-methylguanosine(46) in tRNA + S-adenosyl-L-homocysteine. It functions in the pathway tRNA modification; N(7)-methylguanine-tRNA biosynthesis. Catalyzes the formation of N(7)-methylguanine at position 46 (m7G46) in tRNA. The chain is tRNA (guanine-N(7)-)-methyltransferase from Clostridium tetani (strain Massachusetts / E88).